The sequence spans 394 residues: uncharacterized protein (394 aa).

A run of 12 helical transmembrane segments spans residues 13–33 (LITT…TTMI), 35–55 (MAPT…VLPT), 73–95 (TTMT…TLTV), 110–130 (ALTV…HMVL), 152–172 (IHMV…PTVL), 179–198 (LMVL…TLTV), 216–236 (VLLA…TVLP), 241–261 (VLMV…HMVL), 267–287 (VLMV…PTVL), 293–313 (VLMV…TLTV), 340–360 (MMTL…VTTI), and 372–392 (ILLC…YVSA).

It is found in the membrane. This is an uncharacterized protein from Saccharomyces cerevisiae (strain ATCC 204508 / S288c) (Baker's yeast).